The following is a 330-amino-acid chain: Ferredoxin--NADP reductase (330 aa).

Residues Glu-34, Gln-42, Tyr-47, Val-87, Phe-121, Asp-285, and Ser-325 each coordinate FAD.

The protein belongs to the ferredoxin--NADP reductase type 2 family. In terms of assembly, homodimer. The cofactor is FAD.

The enzyme catalyses 2 reduced [2Fe-2S]-[ferredoxin] + NADP(+) + H(+) = 2 oxidized [2Fe-2S]-[ferredoxin] + NADPH. In Limosilactobacillus fermentum (strain NBRC 3956 / LMG 18251) (Lactobacillus fermentum), this protein is Ferredoxin--NADP reductase.